Consider the following 445-residue polypeptide: Zinc finger protein 296 (445 aa).

A compositionally biased stretch (basic residues) spans Met1–Pro10. Residues Met1–Asp20 are disordered. Residue Lys31 forms a Glycyl lysine isopeptide (Lys-Gly) (interchain with G-Cter in SUMO2) linkage. The interval Ser62 to Thr88 is disordered. 3 consecutive C2H2-type zinc fingers follow at residues Leu138–His161, Pro212–His234, and Tyr240–His262. The segment at Asn256–Gly359 is disordered. Over residues Ser269–Gly278 the composition is skewed to polar residues. Over residues Pro320–Gly332 the composition is skewed to gly residues. The span at Lys338–Ala351 shows a compositional bias: basic and acidic residues. 3 consecutive C2H2-type zinc fingers follow at residues Gly360–His382, Tyr388–His410, and Val418–His441.

It belongs to the krueppel C2H2-type zinc-finger protein family. In terms of assembly, interacts with KLF4. Strongly expressed in testis and embryonic stem cells.

Its subcellular location is the nucleus. In terms of biological role, may be a transcriptional corepressor with KLF4. This chain is Zinc finger protein 296, found in Mus musculus (Mouse).